Here is a 1009-residue protein sequence, read N- to C-terminus: DNA polymerase catalytic subunit (1009 aa).

It belongs to the DNA polymerase type-B family.

Its subcellular location is the host nucleus. The catalysed reaction is DNA(n) + a 2'-deoxyribonucleoside 5'-triphosphate = DNA(n+1) + diphosphate. The polypeptide is DNA polymerase catalytic subunit (9) (Saimiri sciureus (Common squirrel monkey)).